We begin with the raw amino-acid sequence, 213 residues long: Chloramphenicol acetyltransferase 2 (213 aa).

Catalysis depends on His-189, which acts as the Proton acceptor.

Belongs to the chloramphenicol acetyltransferase family. As to quaternary structure, homotrimer.

The enzyme catalyses chloramphenicol + acetyl-CoA = chloramphenicol 3-acetate + CoA. In terms of biological role, this enzyme is an effector of chloramphenicol resistance in bacteria. This is Chloramphenicol acetyltransferase 2 (cmlA) from Escherichia coli.